The primary structure comprises 156 residues: MASYFDEHDCEPTNPEEQYRQNALLELARSLMQGLDIDSGSFDLSDWDQRLPPPAAKAVVQSLPVVIISPEQADKGVKCPVCLLEFEEQESVREMPCKHLFHTGCILPWLNKTNSCPLCRLELPTDNADYEEFKKDKERRRQREHRLEDLHGAMYT.

An RING-type; atypical zinc finger spans residues 79-120; the sequence is CPVCLLEFEEQESVREMPCKHLFHTGCILPWLNKTNSCPLCR. Residues 135–156 form a disordered region; that stretch reads KDKERRRQREHRLEDLHGAMYT.

Belongs to the RNF181 family.

It catalyses the reaction S-ubiquitinyl-[E2 ubiquitin-conjugating enzyme]-L-cysteine + [acceptor protein]-L-lysine = [E2 ubiquitin-conjugating enzyme]-L-cysteine + N(6)-ubiquitinyl-[acceptor protein]-L-lysine.. Its pathway is protein modification; protein ubiquitination. Functionally, E3 ubiquitin-protein ligase which accepts ubiquitin from an E2 ubiquitin-conjugating enzyme in the form of a thioester and then directly transfers the ubiquitin to targeted substrates. Catalyzes monoubiquitination of 26S proteasome subunit PSMC2/RPT1. The protein is E3 ubiquitin-protein ligase RNF181 (rnf181) of Danio rerio (Zebrafish).